An 875-amino-acid chain; its full sequence is Alanine--tRNA ligase (875 aa).

Zn(2+) contacts are provided by histidine 564, histidine 568, cysteine 666, and histidine 670.

It belongs to the class-II aminoacyl-tRNA synthetase family. As to quaternary structure, homotetramer. Requires Zn(2+) as cofactor.

The protein resides in the cytoplasm. It carries out the reaction tRNA(Ala) + L-alanine + ATP = L-alanyl-tRNA(Ala) + AMP + diphosphate. In terms of biological role, catalyzes the attachment of alanine to tRNA(Ala) in a two-step reaction: alanine is first activated by ATP to form Ala-AMP and then transferred to the acceptor end of tRNA(Ala). Also edits incorrectly charged Ser-tRNA(Ala) and Gly-tRNA(Ala) via its editing domain. The polypeptide is Alanine--tRNA ligase (Sodalis glossinidius (strain morsitans)).